The chain runs to 321 residues: Ferredoxin--NADP reductase (321 aa).

Glu33, Gln41, Tyr46, Val86, Leu119, Asp277, and Ser318 together coordinate FAD.

This sequence belongs to the ferredoxin--NADP reductase type 2 family. As to quaternary structure, homodimer. FAD serves as cofactor.

The enzyme catalyses 2 reduced [2Fe-2S]-[ferredoxin] + NADP(+) + H(+) = 2 oxidized [2Fe-2S]-[ferredoxin] + NADPH. In Lactococcus lactis subsp. cremoris (strain SK11), this protein is Ferredoxin--NADP reductase.